A 373-amino-acid chain; its full sequence is MPLQPFKTSNLLTMGVELELQLISLSNFDLTAASPDILELLGRSSFPGSFTPEITESMLEIATDVHEEYDQLLKQLFHIRDALVTVGDRLNIGICGGGTHPFQMWSDQRIFNKTRFIEVSELYGYLTKQFTIFGQHIHIGCEDGNQALFLLHSLNRYIPHFIALSASSPFVQSKDTLYNSARLNSVFAFPLSGRAPFVLNWDEFSLGYFEKMEHTGIVKSMKDFYWDLRPKPEFGTIEMRVCDSPLTVERAAALACYMQALCSYLLENKEPLPHEDDYLVYNYNRFQACRFGLDGTLVHPKTYEQILLREDILTTLRRLKPYANQLNSTMALEHIYEITHKGSDASFLREKYAEHRTLESVVNESLKQFRRSK.

This sequence belongs to the glutamate--cysteine ligase type 2 family. YbdK subfamily.

The enzyme catalyses L-cysteine + L-glutamate + ATP = gamma-L-glutamyl-L-cysteine + ADP + phosphate + H(+). Its function is as follows. ATP-dependent carboxylate-amine ligase which exhibits weak glutamate--cysteine ligase activity. The polypeptide is Putative glutamate--cysteine ligase 2-2 (Legionella pneumophila (strain Corby)).